The chain runs to 20 residues: U1-poneritoxin-Ni1a (20 aa).

At Lys20 the chain carries Lysine amide.

Belongs to the non-disulfide-bridged peptide (NDBP) superfamily. Medium-length antimicrobial peptide (group 3) family. Ponericin-W subfamily. In terms of tissue distribution, expressed by the venom gland.

It localises to the secreted. It is found in the target cell membrane. Has activity against Gram-positive bacteria. Has insecticidal and hemolytic activities. May act by disrupting the integrity of the bacterial cell membrane. This Neoponera inversa (Ant) protein is U1-poneritoxin-Ni1a.